We begin with the raw amino-acid sequence, 305 residues long: Ribonuclease BN (305 aa).

H63, H65, D67, H68, H141, D212, and H270 together coordinate Zn(2+). The active-site Proton acceptor is the D67.

The protein belongs to the RNase Z family. RNase BN subfamily. In terms of assembly, homodimer. Zn(2+) is required as a cofactor.

In terms of biological role, zinc phosphodiesterase, which has both exoribonuclease and endoribonuclease activities. The chain is Ribonuclease BN from Proteus mirabilis (strain HI4320).